A 107-amino-acid polypeptide reads, in one-letter code: DNA polymerase delta subunit 4 (107 aa).

The PCNA-interaction protein motif (PIP box) signature appears at M1–R16. The interval M1–A44 is disordered. Basic and acidic residues predominate over residues K15–L28.

Belongs to the DNA polymerase delta subunit 4 family. Component of the tetrameric DNA polymerase delta complex (Pol-delta4), which consists of POLD1/p125, POLD2/p50, POLD3/p66/p68 and POLD4/p12, with POLD1 bearing DNA polymerase and 3' to 5' proofreading exonuclease activities. Within this complex, directly interacts with POLD1 and POLD2. Directly interacts with PCNA, as do POLD1 and POLD3; this interaction stimulates Pol-delta4 polymerase activity. As POLD1 and POLD2, directly interacts with WRNIP1; this interaction stimulates DNA polymerase delta-mediated DNA synthesis, independently of the presence of PCNA. This stimulation may be due predominantly to an increase of initiation frequency and also to increased processivity. Upon genotoxic stress induced by DNA damaging agents or by replication stress, POLD4 is proteolytically degraded and Pol-delta4 is converted into a trimeric form of the complex (Pol-delta3) which has an increased proofreading activity. The DNA polymerase delta complex interacts with POLDIP2; this interaction is probably mediated through direct binding to POLD2. Ubiquitinated; undergoes 'Lys-48'-linked ubiquitination in response to UV irradiation, leading to proteasomal degradation. This modification is partly mediated by RNF8 and by the DCX(DTL) E3 ubiquitin ligase complex (also called CRL4(CDT2)). Efficient degradation requires the presence of PCNA and is required for the inhibition of fork progression after DNA damage.

It is found in the nucleus. Functionally, as a component of the tetrameric DNA polymerase delta complex (Pol-delta4), plays a role in high fidelity genome replication and repair. Within this complex, increases the rate of DNA synthesis and decreases fidelity by regulating POLD1 polymerase and proofreading 3' to 5' exonuclease activity. Pol-delta4 participates in Okazaki fragment processing, through both the short flap pathway, as well as a nick translation system. Under conditions of DNA replication stress, required for the repair of broken replication forks through break-induced replication (BIR), a mechanism that may induce segmental genomic duplications of up to 200 kb. Involved in Pol-delta4 translesion synthesis (TLS) of templates carrying O6-methylguanine or abasic sites. Its degradation in response to DNA damage is required for the inhibition of fork progression and cell survival. This is DNA polymerase delta subunit 4 (POLD4) from Homo sapiens (Human).